A 365-amino-acid chain; its full sequence is Aspartate-semialdehyde dehydrogenase (365 aa).

NADP(+)-binding residues include T15, G16, T17, V18, S40, S43, L89, and D90. The active-site Acyl-thioester intermediate is C156. Residue G188 coordinates NADP(+). H255 acts as the Proton acceptor in catalysis. N342 contributes to the NADP(+) binding site.

Belongs to the aspartate-semialdehyde dehydrogenase family. In terms of assembly, homotetramer; dimer of dimers.

It localises to the cytoplasm. The protein localises to the cytosol. It is found in the nucleus. It catalyses the reaction L-aspartate 4-semialdehyde + phosphate + NADP(+) = 4-phospho-L-aspartate + NADPH + H(+). The protein operates within amino-acid biosynthesis; L-methionine biosynthesis via de novo pathway; L-homoserine from L-aspartate: step 2/3. It participates in amino-acid biosynthesis; L-threonine biosynthesis; L-threonine from L-aspartate: step 2/5. Inhibited by the competitive inhibitor 1,4-benzoquinone and derivates such as 2-chloro-3-methoxy-1,4-naphthoquinone, 2,3-dichloro-1,4-naphthoquinone, 2-chloro-1,4-naphthoquinone, 2-bromo-1,4-naphthoquinone and 2,3-dichloro-5,8-dihydroxy-1,4-naphthoquinone. In terms of biological role, catalyzes the NADPH-dependent formation of L-aspartate 4-semialdehyde (L-ASA) by the reductive dephosphorylation of 4-phospho-L-aspartate. Mediates the second step in the biosynthesis of amino acids that derive from aspartate (the aspartate family of amino acids), including methioinine and threonine, the latter of which is a precursor to isoleucine. The protein is Aspartate-semialdehyde dehydrogenase of Cryptococcus neoformans var. neoformans serotype D (strain JEC21 / ATCC MYA-565) (Filobasidiella neoformans).